Here is a 154-residue protein sequence, read N- to C-terminus: Deoxyuridine 5'-triphosphate nucleotidohydrolase (154 aa).

Substrate-binding positions include 70 to 72 (RSG), N83, 87 to 89 (LID), and M97.

The protein belongs to the dUTPase family. The cofactor is Mg(2+).

The catalysed reaction is dUTP + H2O = dUMP + diphosphate + H(+). It functions in the pathway pyrimidine metabolism; dUMP biosynthesis; dUMP from dCTP (dUTP route): step 2/2. This enzyme is involved in nucleotide metabolism: it produces dUMP, the immediate precursor of thymidine nucleotides and it decreases the intracellular concentration of dUTP so that uracil cannot be incorporated into DNA. The sequence is that of Deoxyuridine 5'-triphosphate nucleotidohydrolase from Buchnera aphidicola subsp. Acyrthosiphon pisum (strain 5A).